The primary structure comprises 413 residues: Tyrosine--tRNA ligase (413 aa).

Tyrosine 34 serves as a coordination point for L-tyrosine. Positions proline 39–histidine 48 match the 'HIGH' region motif. Residues tyrosine 164 and glutamine 168 each contribute to the L-tyrosine site. The short motif at lysine 225 to serine 229 is the 'KMSKS' region element. Position 228 (lysine 228) interacts with ATP. Residues isoleucine 347–phenylalanine 413 enclose the S4 RNA-binding domain.

This sequence belongs to the class-I aminoacyl-tRNA synthetase family. TyrS type 1 subfamily. In terms of assembly, homodimer.

The protein localises to the cytoplasm. The catalysed reaction is tRNA(Tyr) + L-tyrosine + ATP = L-tyrosyl-tRNA(Tyr) + AMP + diphosphate + H(+). Functionally, catalyzes the attachment of tyrosine to tRNA(Tyr) in a two-step reaction: tyrosine is first activated by ATP to form Tyr-AMP and then transferred to the acceptor end of tRNA(Tyr). In Aster yellows witches'-broom phytoplasma (strain AYWB), this protein is Tyrosine--tRNA ligase.